The following is a 345-amino-acid chain: Glycerol-3-phosphate dehydrogenase [NAD(P)+] (345 aa).

Residues S11, W12, R32, R33, and K105 each coordinate NADPH. K105, G136, and S138 together coordinate sn-glycerol 3-phosphate. A140 contacts NADPH. Positions 191, 244, 254, 255, and 256 each coordinate sn-glycerol 3-phosphate. K191 serves as the catalytic Proton acceptor. R255 is an NADPH binding site. Positions 279 and 281 each coordinate NADPH.

Belongs to the NAD-dependent glycerol-3-phosphate dehydrogenase family.

Its subcellular location is the cytoplasm. The catalysed reaction is sn-glycerol 3-phosphate + NAD(+) = dihydroxyacetone phosphate + NADH + H(+). It carries out the reaction sn-glycerol 3-phosphate + NADP(+) = dihydroxyacetone phosphate + NADPH + H(+). The protein operates within membrane lipid metabolism; glycerophospholipid metabolism. Functionally, catalyzes the reduction of the glycolytic intermediate dihydroxyacetone phosphate (DHAP) to sn-glycerol 3-phosphate (G3P), the key precursor for phospholipid synthesis. The protein is Glycerol-3-phosphate dehydrogenase [NAD(P)+] of Halalkalibacterium halodurans (strain ATCC BAA-125 / DSM 18197 / FERM 7344 / JCM 9153 / C-125) (Bacillus halodurans).